Here is a 748-residue protein sequence, read N- to C-terminus: Phytochrome-like protein Cph1 (748 aa).

The PAS domain maps to 19-86; sequence AIHTAHLIQP…IQSRLTAGQI (68 aa). Positions 87 to 510 are chromophore binding domain; sequence SSLNPSKLWA…KKAIVNLILR (424 aa). The 169-residue stretch at 152-320 folds into the GAF domain; it reads NLRDFYDVIV…VVFSNISAQE (169 aa). Residue Cys-259 participates in a tetrapyrrole binding. The Histidine kinase domain occupies 535 to 748; that stretch reads IASHDLQEPL…TFYFSIPIGN (214 aa). Residue His-538 is modified to Phosphohistidine; by autocatalysis.

It in the N-terminal section; belongs to the phytochrome family. In terms of assembly, homodimer. Contains one covalently linked tetrapyrrole chromophore.

The catalysed reaction is ATP + protein L-histidine = ADP + protein N-phospho-L-histidine.. In terms of biological role, regulatory photoreceptor which exists in two forms that are reversibly interconvertible by light: the R form that absorbs maximally in the red region of the spectrum and the FR form that absorbs maximally in the far-red region. Also has a slight blue shift for the far-red maximum. Forms a two-component system with the Rrcp1 response regulator. This is Phytochrome-like protein Cph1 (cph1) from Synechocystis sp. (strain ATCC 27184 / PCC 6803 / Kazusa).